The chain runs to 379 residues: Homoserine O-succinyltransferase (379 aa).

The AB hydrolase-1 domain occupies 51-360; that stretch reads NAVLICHALS…DAPQGHDAFL (310 aa). Ser-157 acts as the Nucleophile in catalysis. Arg-227 lines the substrate pocket. Catalysis depends on residues Asp-323 and His-356. Position 357 (Asp-357) interacts with substrate.

The protein belongs to the AB hydrolase superfamily. MetX family. As to quaternary structure, homodimer.

It is found in the cytoplasm. It catalyses the reaction L-homoserine + succinyl-CoA = O-succinyl-L-homoserine + CoA. Its pathway is amino-acid biosynthesis; L-methionine biosynthesis via de novo pathway; O-succinyl-L-homoserine from L-homoserine: step 1/1. Functionally, transfers a succinyl group from succinyl-CoA to L-homoserine, forming succinyl-L-homoserine. In Pseudomonas syringae pv. tomato (strain ATCC BAA-871 / DC3000), this protein is Homoserine O-succinyltransferase.